Reading from the N-terminus, the 555-residue chain is HERV-H_2q24.1 provirus ancestral Env polyprotein (555 aa).

The signal sequence occupies residues 1-35 (MILAGRAPSNTSTLMKFYSLLLYSLLFSFPFLYHP). At 36–515 (LPLPSYLHHT…WALSNWMSWV (480 aa)) the chain is on the extracellular side. Asn47 carries N-linked (GlcNAc...) asparagine glycosylation. A CXXC motif is present at residues 64–67 (CWLC). Residues Asn222, Asn265, Asn283, Asn352, and Asn370 are each glycosylated (N-linked (GlcNAc...) asparagine). The fusion peptide stretch occupies residues 388–408 (VIPLIPLMVGLGLSASTIALS). Asn475 carries N-linked (GlcNAc...) asparagine glycosylation. Residues 516–536 (LPILSPLIPIFLLLLFGPCIF) traverse the membrane as a helical segment. Over 537–555 (HLVSQFIQNRIQAITNHSI) the chain is Cytoplasmic.

Belongs to the gamma type-C retroviral envelope protein family. HERV class-I H env subfamily. As to quaternary structure, the surface (SU) and transmembrane (TM) proteins form a heterodimer. SU and TM are attached by noncovalent interactions or by a labile interchain disulfide bond. In terms of processing, specific enzymatic cleavages in vivo yield the mature SU and TM proteins. Low expression in testis.

It localises to the virion. It is found in the cell membrane. Retroviral envelope proteins mediate receptor recognition and membrane fusion during early infection. Endogenous envelope proteins may have kept, lost or modified their original function during evolution. This endogenous envelope protein has lost its original fusogenic properties. Functionally, SU mediates receptor recognition. In terms of biological role, TM anchors the envelope heterodimer to the viral membrane through one transmembrane domain. The other hydrophobic domain, called fusion peptide, mediates fusion of the viral membrane with the target cell membrane. This Homo sapiens (Human) protein is HERV-H_2q24.1 provirus ancestral Env polyprotein.